Here is a 373-residue protein sequence, read N- to C-terminus: Dual-specificity RNA methyltransferase RlmN (373 aa).

Residue Glu-94 is the Proton acceptor of the active site. The 240-residue stretch at 100–339 (EEDRATLCVS…VIVRKTRGDD (240 aa)) folds into the Radical SAM core domain. The cysteines at positions 107 and 344 are disulfide-linked. Cys-114, Cys-118, and Cys-121 together coordinate [4Fe-4S] cluster. Residues 168 to 169 (GE), Ser-200, 222 to 224 (SIH), and Asn-301 contribute to the S-adenosyl-L-methionine site. Cys-344 serves as the catalytic S-methylcysteine intermediate.

The protein belongs to the radical SAM superfamily. RlmN family. [4Fe-4S] cluster serves as cofactor.

It is found in the cytoplasm. The catalysed reaction is adenosine(2503) in 23S rRNA + 2 reduced [2Fe-2S]-[ferredoxin] + 2 S-adenosyl-L-methionine = 2-methyladenosine(2503) in 23S rRNA + 5'-deoxyadenosine + L-methionine + 2 oxidized [2Fe-2S]-[ferredoxin] + S-adenosyl-L-homocysteine. The enzyme catalyses adenosine(37) in tRNA + 2 reduced [2Fe-2S]-[ferredoxin] + 2 S-adenosyl-L-methionine = 2-methyladenosine(37) in tRNA + 5'-deoxyadenosine + L-methionine + 2 oxidized [2Fe-2S]-[ferredoxin] + S-adenosyl-L-homocysteine. In terms of biological role, specifically methylates position 2 of adenine 2503 in 23S rRNA and position 2 of adenine 37 in tRNAs. m2A2503 modification seems to play a crucial role in the proofreading step occurring at the peptidyl transferase center and thus would serve to optimize ribosomal fidelity. This chain is Dual-specificity RNA methyltransferase RlmN, found in Shewanella frigidimarina (strain NCIMB 400).